A 115-amino-acid polypeptide reads, in one-letter code: NAD(P)H-quinone oxidoreductase subunit M (115 aa).

It belongs to the complex I NdhM subunit family. NDH-1 can be composed of about 15 different subunits; different subcomplexes with different compositions have been identified which probably have different functions.

Its subcellular location is the cellular thylakoid membrane. The enzyme catalyses a plastoquinone + NADH + (n+1) H(+)(in) = a plastoquinol + NAD(+) + n H(+)(out). It carries out the reaction a plastoquinone + NADPH + (n+1) H(+)(in) = a plastoquinol + NADP(+) + n H(+)(out). Functionally, NDH-1 shuttles electrons from an unknown electron donor, via FMN and iron-sulfur (Fe-S) centers, to quinones in the respiratory and/or the photosynthetic chain. The immediate electron acceptor for the enzyme in this species is believed to be plastoquinone. Couples the redox reaction to proton translocation, and thus conserves the redox energy in a proton gradient. Cyanobacterial NDH-1 also plays a role in inorganic carbon-concentration. This is NAD(P)H-quinone oxidoreductase subunit M from Synechococcus sp. (strain CC9605).